We begin with the raw amino-acid sequence, 325 residues long: Cln5-like protein 2 (325 aa).

An N-terminal signal peptide occupies residues 1 to 19; it reads MNKLIFIIICLGIVDKTIS. Residues asparagine 88, asparagine 117, asparagine 133, asparagine 163, asparagine 182, asparagine 189, asparagine 238, and asparagine 262 are each glycosylated (N-linked (GlcNAc...) asparagine).

The protein belongs to the CLN5 family.

In Dictyostelium discoideum (Social amoeba), this protein is Cln5-like protein 2 (cln5lb).